An 87-amino-acid chain; its full sequence is Large ribosomal subunit protein eL31 (87 aa).

Belongs to the eukaryotic ribosomal protein eL31 family.

The chain is Large ribosomal subunit protein eL31 from Methanocorpusculum labreanum (strain ATCC 43576 / DSM 4855 / Z).